The chain runs to 99 residues: MTTPPDKARRRFLRDAYKNAERVARTALLTIDQDQLEQLLDYVDERLGEQPCDHTARHAQRWAQSHRIEWETLAEGLQEFGGYCDCEIVMNVEPEAIFG.

This is an uncharacterized protein from Mycobacterium tuberculosis (strain CDC 1551 / Oshkosh).